Consider the following 278-residue polypeptide: 4-hydroxy-tetrahydrodipicolinate reductase (278 aa).

NAD(+)-binding positions include 16–21 (GAGGRM) and Glu-42. Arg-43 lines the NADP(+) pocket. NAD(+) contacts are provided by residues 106-108 (GTT) and 130-133 (AGNY). The active-site Proton donor/acceptor is the His-163. His-164 serves as a coordination point for (S)-2,3,4,5-tetrahydrodipicolinate. The Proton donor role is filled by Lys-167. Residue 173–174 (GT) coordinates (S)-2,3,4,5-tetrahydrodipicolinate.

This sequence belongs to the DapB family.

It localises to the cytoplasm. It carries out the reaction (S)-2,3,4,5-tetrahydrodipicolinate + NAD(+) + H2O = (2S,4S)-4-hydroxy-2,3,4,5-tetrahydrodipicolinate + NADH + H(+). The enzyme catalyses (S)-2,3,4,5-tetrahydrodipicolinate + NADP(+) + H2O = (2S,4S)-4-hydroxy-2,3,4,5-tetrahydrodipicolinate + NADPH + H(+). It participates in amino-acid biosynthesis; L-lysine biosynthesis via DAP pathway; (S)-tetrahydrodipicolinate from L-aspartate: step 4/4. In terms of biological role, catalyzes the conversion of 4-hydroxy-tetrahydrodipicolinate (HTPA) to tetrahydrodipicolinate. In Psychrobacter arcticus (strain DSM 17307 / VKM B-2377 / 273-4), this protein is 4-hydroxy-tetrahydrodipicolinate reductase.